Here is a 300-residue protein sequence, read N- to C-terminus: Telomere repeat-binding factor 1 (300 aa).

Residues 1-58 (MGAPKQKWTQEEESALKSGVIKHGPGKWRTILKDPEFSGVLYLRSNVDLKDKWRNMSV) enclose the HTH myb-type domain. The segment at residues 28 to 57 (WRTILKDPEFSGVLYLRSNVDLKDKWRNMS) is a DNA-binding region (H-T-H motif). 2 disordered regions span residues 93–119 (LQSD…RPNV) and 185–213 (NSTP…PSPK). Residues 117 to 185 (PNVRLDSLIM…KVKRKYRIPN (69 aa)) enclose the H15 domain. A coiled-coil region spans residues 241–290 (EAAAVAAQAVAEAEAAMAEAEEAAKEAEAAEAEAEAAQAFAEEASKTLKG).

Belongs to the histone H1/H5 family. SMH subfamily. Forms a homodimer and heterodimers with TRB2 or TRB3. Interacts with POT1b, TRB2 and TRB3 through its H15 domain.

The protein resides in the nucleus. Its subcellular location is the nucleolus. The protein localises to the chromosome. In terms of biological role, binds preferentially double-stranded telomeric repeats. The protein is Telomere repeat-binding factor 1 (TRB1) of Arabidopsis thaliana (Mouse-ear cress).